Reading from the N-terminus, the 141-residue chain is ATP synthase epsilon chain (141 aa).

Belongs to the ATPase epsilon chain family. In terms of assembly, F-type ATPases have 2 components, CF(1) - the catalytic core - and CF(0) - the membrane proton channel. CF(1) has five subunits: alpha(3), beta(3), gamma(1), delta(1), epsilon(1). CF(0) has three main subunits: a, b and c.

The protein localises to the cell membrane. Its function is as follows. Produces ATP from ADP in the presence of a proton gradient across the membrane. The sequence is that of ATP synthase epsilon chain from Natranaerobius thermophilus (strain ATCC BAA-1301 / DSM 18059 / JW/NM-WN-LF).